Here is a 159-residue protein sequence, read N- to C-terminus: uncharacterized protein (159 aa).

A divalent metal cation is bound by residues H44, H124, and H128.

Belongs to the DinB family.

This is an uncharacterized protein from Bacillus subtilis (strain 168).